Reading from the N-terminus, the 368-residue chain is 1-deoxy-D-xylulose 5-phosphate reductoisomerase (368 aa).

The NADPH site is built by threonine 9, glycine 10, serine 11, isoleucine 12, asparagine 35, and asparagine 106. Lysine 107 provides a ligand contact to 1-deoxy-D-xylulose 5-phosphate. Glutamate 108 is a binding site for NADPH. Position 132 (aspartate 132) interacts with Mn(2+). Residues serine 133, glutamate 134, serine 158, and histidine 181 each coordinate 1-deoxy-D-xylulose 5-phosphate. Glutamate 134 lines the Mn(2+) pocket. Glycine 187 is a binding site for NADPH. The 1-deoxy-D-xylulose 5-phosphate site is built by serine 194, asparagine 199, lysine 200, and glutamate 203. Glutamate 203 lines the Mn(2+) pocket.

The protein belongs to the DXR family. Mg(2+) is required as a cofactor. It depends on Mn(2+) as a cofactor.

The enzyme catalyses 2-C-methyl-D-erythritol 4-phosphate + NADP(+) = 1-deoxy-D-xylulose 5-phosphate + NADPH + H(+). Its pathway is isoprenoid biosynthesis; isopentenyl diphosphate biosynthesis via DXP pathway; isopentenyl diphosphate from 1-deoxy-D-xylulose 5-phosphate: step 1/6. Its function is as follows. Catalyzes the NADPH-dependent rearrangement and reduction of 1-deoxy-D-xylulose-5-phosphate (DXP) to 2-C-methyl-D-erythritol 4-phosphate (MEP). The polypeptide is 1-deoxy-D-xylulose 5-phosphate reductoisomerase (Mycoplasmoides gallisepticum (strain R(low / passage 15 / clone 2)) (Mycoplasma gallisepticum)).